The sequence spans 533 residues: Dipeptide-binding protein (533 aa).

The N-terminal stretch at 1–24 is a signal peptide; the sequence is MRKILPLRAWLAAGLILGSPFSHA.

The protein belongs to the bacterial solute-binding protein 5 family.

The protein localises to the periplasm. In terms of biological role, binds different dipeptides. Probably bind only L-amino acid containing dipeptides. This is Dipeptide-binding protein from Pseudomonas aeruginosa (strain ATCC 15692 / DSM 22644 / CIP 104116 / JCM 14847 / LMG 12228 / 1C / PRS 101 / PAO1).